An 80-amino-acid chain; its full sequence is Lantibiotic Flvalpha.c (80 aa).

The propeptide at 1–38 (MNKNPIYRSEEEAKNIACGNVAAELDENSQALDAINGA) is cleaved by FlvT. 2,3-didehydrobutyrine; by FlvM1 occurs at positions 43 and 47. Positions 52–55 (TLGC) form a cross-link, beta-methyllanthionine (Thr-Cys); by FlvM1. The segment at residues 58-68 (SYGLGNGGYCC) is a cross-link (lanthionine (Ser-Cys); by FlvM1). 2 cross-links (beta-methyllanthionine (Thr-Cys); by FlvM1) span residues 69–74 (TYTVEC) and 71–78 (TVECSKTC).

In terms of processing, the lanthionine formed by Ser-58 and Cys-68 forms a putative lipid II binding motif. Maturation of FlvA1 peptides involves the enzymatic conversion of Thr, and Ser into dehydrated AA and the formation of thioether bonds with cysteines. Modifications are processed by the flavecin synthetase FlvM1. This is followed by membrane translocation and cleavage of the modified precursor. Post-translationally, contains DL-lanthionine and DL-beta-methyllanthionine, when coepressed in E.coli with the flavecin synthetase FlvM1.

The protein resides in the secreted. In terms of biological role, lanthionine-containing peptide antibiotic (lantibiotic) only active on Gram-positive bacteria in synergy with Flvbeta peptides, which are encoded by the same operon than Flvalpha.a. Shows antibacterial activity in synergy with Flvbeta.b, Flvbeta.c, Flvbeta.e and Flvbeta.g. Does not show antibacterial activity when tested with Flvbeta.a, Flvbeta.d, Flvbeta.f and Flvbeta.h. The bactericidal activity of lantibiotics is based on depolarization of energized bacterial cytoplasmic membranes, initiated by the formation of aqueous transmembrane pores. The chain is Lantibiotic Flvalpha.c from Ruminococcus flavefaciens.